The following is a 473-amino-acid chain: MDSVSKDMINVLPDALLCHILSFLTTKEAASTSLLSRRWRYLLAFVPNLEFDDSVYLHRDKRVKNTLHEKGFVGFVLLVNNKRKKLSTSFPDFVDRILALQGNSPLDKFSLKMVDGHDPVDPDSVVPWIHKVLVRGVSDLHLVVDMNEWTSDPLPSRIFLSETLVKLTIKIRDGPFIDVKHVHLPKLKTLYLQSVMFDENDIGFRKLLSGCPVLEELVLDGMGSCVWTSFTVSVATLKRLTFCCQKMSSFGYMHDDENPNNVSFDTPNLVYLEYAQVIANNYPKVNFDLLVEAKIDIWMTVDQIREVRLRKNEVNCMVGNATDFIVGLRNVRVLYLSPETLEVLTYCCKQIPIFENLSHLTIKSDPNVGWKPLTKLLKNSPKLETLVFQGLLHRDNKEDVAISSSSVKVLKIFLSGDKLKKQIEKVKHFLKTMPRLEQLVFYYDVKVLSQLHMLSRLASPKCKIHLIPSRESV.

The 49-residue stretch at 6-54 folds into the F-box domain; that stretch reads KDMINVLPDALLCHILSFLTTKEAASTSLLSRRWRYLLAFVPNLEFDDS. 5 LRR repeats span residues 168–194, 196–221, 229–254, 333–364, and 365–390; these read TIKI…YLQS, MFDE…VLDG, SFTV…GYMH, VLYL…TIKS, and DPNV…VFQG.

This Arabidopsis thaliana (Mouse-ear cress) protein is Putative F-box/LRR-repeat protein At3g59170.